Reading from the N-terminus, the 491-residue chain is Chromosomal replication initiator protein DnaA (491 aa).

Residues 1–69 (MTTWNKCLKK…TIQEFHDGDL (69 aa)) form a domain I, interacts with DnaA modulators region. The tract at residues 69–154 (LLIEYSNKKF…KDDQEYSFGL (86 aa)) is domain II. The segment at 106-126 (DSEETSLNQEPKKSQKKLSSK) is disordered. Residues 155 to 371 (PLKEKYVFDS…GALNRVLTTS (217 aa)) form a domain III, AAA+ region region. Positions 199, 201, 202, and 203 each coordinate ATP. A domain IV, binds dsDNA region spans residues 372–491 (KFNHKDPTIE…YELLLDKISR (120 aa)).

The protein belongs to the DnaA family. As to quaternary structure, oligomerizes as a right-handed, spiral filament on DNA at oriC.

The protein localises to the cytoplasm. Functionally, plays an essential role in the initiation and regulation of chromosomal replication. ATP-DnaA binds to the origin of replication (oriC) to initiate formation of the DNA replication initiation complex once per cell cycle. Binds the DnaA box (a 9 base pair repeat at the origin) and separates the double-stranded (ds)DNA. Forms a right-handed helical filament on oriC DNA; dsDNA binds to the exterior of the filament while single-stranded (ss)DNA is stabiized in the filament's interior. The ATP-DnaA-oriC complex binds and stabilizes one strand of the AT-rich DNA unwinding element (DUE), permitting loading of DNA polymerase. After initiation quickly degrades to an ADP-DnaA complex that is not apt for DNA replication. Binds acidic phospholipids. In Francisella philomiragia subsp. philomiragia (strain ATCC 25017 / CCUG 19701 / FSC 153 / O#319-036), this protein is Chromosomal replication initiator protein DnaA.